Reading from the N-terminus, the 124-residue chain is Large ribosomal subunit protein bL19 (124 aa).

The protein belongs to the bacterial ribosomal protein bL19 family.

In terms of biological role, this protein is located at the 30S-50S ribosomal subunit interface and may play a role in the structure and function of the aminoacyl-tRNA binding site. The polypeptide is Large ribosomal subunit protein bL19 (Orientia tsutsugamushi (strain Boryong) (Rickettsia tsutsugamushi)).